The primary structure comprises 99 residues: Aspartyl/glutamyl-tRNA(Asn/Gln) amidotransferase subunit C (99 aa).

Belongs to the GatC family. Heterotrimer of A, B and C subunits.

The enzyme catalyses L-glutamyl-tRNA(Gln) + L-glutamine + ATP + H2O = L-glutaminyl-tRNA(Gln) + L-glutamate + ADP + phosphate + H(+). It catalyses the reaction L-aspartyl-tRNA(Asn) + L-glutamine + ATP + H2O = L-asparaginyl-tRNA(Asn) + L-glutamate + ADP + phosphate + 2 H(+). In terms of biological role, allows the formation of correctly charged Asn-tRNA(Asn) or Gln-tRNA(Gln) through the transamidation of misacylated Asp-tRNA(Asn) or Glu-tRNA(Gln) in organisms which lack either or both of asparaginyl-tRNA or glutaminyl-tRNA synthetases. The reaction takes place in the presence of glutamine and ATP through an activated phospho-Asp-tRNA(Asn) or phospho-Glu-tRNA(Gln). The sequence is that of Aspartyl/glutamyl-tRNA(Asn/Gln) amidotransferase subunit C from Macrococcus caseolyticus (strain JCSC5402) (Macrococcoides caseolyticum).